The chain runs to 139 residues: Small ribosomal subunit protein uS12 (139 aa).

2 disordered regions span residues 1-22 (MPTI…SKSP) and 37-57 (KTPS…TPKK). Basic residues predominate over residues 9-19 (RKGRKSHKGKS). 3-methylthioaspartic acid is present on D102.

It belongs to the universal ribosomal protein uS12 family. As to quaternary structure, part of the 30S ribosomal subunit. Contacts proteins S8 and S17. May interact with IF1 in the 30S initiation complex.

Its function is as follows. With S4 and S5 plays an important role in translational accuracy. Functionally, interacts with and stabilizes bases of the 16S rRNA that are involved in tRNA selection in the A site and with the mRNA backbone. Located at the interface of the 30S and 50S subunits, it traverses the body of the 30S subunit contacting proteins on the other side and probably holding the rRNA structure together. The combined cluster of proteins S8, S12 and S17 appears to hold together the shoulder and platform of the 30S subunit. The chain is Small ribosomal subunit protein uS12 from Limosilactobacillus reuteri (strain DSM 20016) (Lactobacillus reuteri).